We begin with the raw amino-acid sequence, 788 residues long: Endonuclease MutS2 (788 aa).

334-341 (GPNTGGKT) serves as a coordination point for ATP. In terms of domain architecture, Smr spans 713-788 (LDLRGKRYEE…GNGATVVKFQ (76 aa)).

It belongs to the DNA mismatch repair MutS family. MutS2 subfamily. In terms of assembly, homodimer. Binds to stalled ribosomes, contacting rRNA.

Functionally, endonuclease that is involved in the suppression of homologous recombination and thus may have a key role in the control of bacterial genetic diversity. In terms of biological role, acts as a ribosome collision sensor, splitting the ribosome into its 2 subunits. Detects stalled/collided 70S ribosomes which it binds and splits by an ATP-hydrolysis driven conformational change. Acts upstream of the ribosome quality control system (RQC), a ribosome-associated complex that mediates the extraction of incompletely synthesized nascent chains from stalled ribosomes and their subsequent degradation. Probably generates substrates for RQC. The polypeptide is Endonuclease MutS2 (Enterococcus faecalis (strain ATCC 700802 / V583)).